The sequence spans 215 residues: Pyrophosphatase PpaX (215 aa).

Asp-9 functions as the Nucleophile in the catalytic mechanism.

It belongs to the HAD-like hydrolase superfamily. PpaX family. The cofactor is Mg(2+).

It catalyses the reaction diphosphate + H2O = 2 phosphate + H(+). Functionally, hydrolyzes pyrophosphate formed during P-Ser-HPr dephosphorylation by HPrK/P. Might play a role in controlling the intracellular pyrophosphate pool. In Anoxybacillus flavithermus (strain DSM 21510 / WK1), this protein is Pyrophosphatase PpaX.